The following is a 481-amino-acid chain: Keratin, type I cytoskeletal 39 (481 aa).

The interval 1 to 25 is disordered; that stretch reads MDTKGSTVTISSSTPPQNCSGNTNV. Positions 1–90 are head; it reads MDTKGSTVTI…RCSDGINSHE (90 aa). The IF rod domain maps to 90–401; it reads EKETMQILNE…SLLESLDGRL (312 aa). The interval 91–125 is coil 1A; that stretch reads KETMQILNERLASYLEKVRMLEGENADLEDKIQEE. Residues 126–136 form a linker 1 region; the sequence is CSKTLPILCPD. The segment at 137–237 is coil 1B; the sequence is YLSYYTTIEQ…HEEEINSLQC (101 aa). A linker 12 region spans residues 238 to 253; the sequence is QLGDRINIEVTAAPSV. Residues 254–397 are coil 2; the sequence is DLNQILQKMR…ATYRSLLESL (144 aa). The interval 398–481 is tail; the sequence is DGRLPCNPCT…PCYITRPAKV (84 aa).

The protein belongs to the intermediate filament family. Heterotetramer of two type I and two type II keratins.

In terms of biological role, may play a role in late hair differentiation. This Rattus norvegicus (Rat) protein is Keratin, type I cytoskeletal 39 (Krt39).